Here is a 202-residue protein sequence, read N- to C-terminus: Ion-translocating oxidoreductase complex subunit G (202 aa).

The chain crosses the membrane as a helical span at residues Ala11–Leu31. Thr177 carries the post-translational modification FMN phosphoryl threonine.

Belongs to the RnfG family. As to quaternary structure, the complex is composed of six subunits: RnfA, RnfB, RnfC, RnfD, RnfE and RnfG. It depends on FMN as a cofactor.

The protein resides in the cell inner membrane. In terms of biological role, part of a membrane-bound complex that couples electron transfer with translocation of ions across the membrane. In Pasteurella multocida (strain Pm70), this protein is Ion-translocating oxidoreductase complex subunit G.